Consider the following 307-residue polypeptide: Acyl transferase (307 aa).

Active-site charge relay system residues include S116, D213, and H243.

The protein belongs to the LuxD family.

Its pathway is lipid metabolism; fatty acid reduction for biolumincescence. Its function is as follows. Acyl transferase is part of the fatty acid reductase system required for aldehyde biosynthesis; it produces fatty acids for the luminescent reaction. This is Acyl transferase from Aliivibrio fischeri (strain MJ11) (Vibrio fischeri).